Consider the following 369-residue polypeptide: Epoxyqueuosine reductase (369 aa).

Aspartate 135 acts as the Proton donor in catalysis. The 4Fe-4S ferredoxin-type domain maps to 177–209 (IPLPVDEPSENQCGKCTACITSCPTNAIVAEGV). [4Fe-4S] cluster-binding residues include cysteine 189, cysteine 192, cysteine 195, cysteine 199, cysteine 215, cysteine 242, cysteine 245, and cysteine 249.

It belongs to the QueG family. In terms of assembly, monomer. The cofactor is cob(II)alamin. [4Fe-4S] cluster serves as cofactor.

It localises to the cytoplasm. It carries out the reaction epoxyqueuosine(34) in tRNA + AH2 = queuosine(34) in tRNA + A + H2O. Its pathway is tRNA modification; tRNA-queuosine biosynthesis. Its function is as follows. Catalyzes the conversion of epoxyqueuosine (oQ) to queuosine (Q), which is a hypermodified base found in the wobble positions of tRNA(Asp), tRNA(Asn), tRNA(His) and tRNA(Tyr). This Vibrio cholerae serotype O1 (strain ATCC 39315 / El Tor Inaba N16961) protein is Epoxyqueuosine reductase.